The sequence spans 72 residues: Large ribosomal subunit protein uL29 (72 aa).

This sequence belongs to the universal ribosomal protein uL29 family.

This is Large ribosomal subunit protein uL29 from Chlamydia abortus (strain DSM 27085 / S26/3) (Chlamydophila abortus).